The primary structure comprises 233 residues: MTNHQKRLSVPKSWPVERKTETFTAKAGAGPHGESGVPLVVVLRDVLEYVDDTSEAQYAINTDGVLVNGDSVGDVNRPIGMFDILAFPDRDEYYRVFPDEGGRLGLTEIDADAAGSKLNKVTDKTTVSGGRTQLNFHDGSNLALDEDAYAGGDSVVVDTDTNEIVAHFQYEEGALVTAVAGQHAGDIGEIAEINVQPGSASNTVRVDDENGGFETIAEYVVVIDENFVEEDDE.

One can recognise an S4 RNA-binding domain in the interval 37 to 99 (VPLVVVLRDV…RDEYYRVFPD (63 aa)).

This sequence belongs to the eukaryotic ribosomal protein eS4 family.

The sequence is that of Small ribosomal subunit protein eS4 from Halobacterium salinarum (strain ATCC 29341 / DSM 671 / R1).